Reading from the N-terminus, the 225-residue chain is Transcriptional regulatory protein CssR (225 aa).

The Response regulatory domain occupies threonine 4–leucine 117. Aspartate 52 carries the post-translational modification 4-aspartylphosphate. Residues lysine 129–serine 224 constitute a DNA-binding region (ompR/PhoB-type).

In terms of processing, phosphorylated by CssS.

It localises to the cytoplasm. Functionally, member of the two-component regulatory system CssS/CssR required to control the cellular response to secretion stress. The polypeptide is Transcriptional regulatory protein CssR (cssR) (Bacillus subtilis (strain 168)).